The following is a 426-amino-acid chain: Glutamate-1-semialdehyde 2,1-aminomutase (426 aa).

The residue at position 265 (lysine 265) is an N6-(pyridoxal phosphate)lysine.

Belongs to the class-III pyridoxal-phosphate-dependent aminotransferase family. HemL subfamily. In terms of assembly, homodimer. It depends on pyridoxal 5'-phosphate as a cofactor.

The protein resides in the cytoplasm. The enzyme catalyses (S)-4-amino-5-oxopentanoate = 5-aminolevulinate. Its pathway is porphyrin-containing compound metabolism; protoporphyrin-IX biosynthesis; 5-aminolevulinate from L-glutamyl-tRNA(Glu): step 2/2. The protein is Glutamate-1-semialdehyde 2,1-aminomutase of Halorhodospira halophila (strain DSM 244 / SL1) (Ectothiorhodospira halophila (strain DSM 244 / SL1)).